The chain runs to 947 residues: Altered inheritance of mitochondria protein 3 (947 aa).

Disordered stretches follow at residues 1-332 (MGFW…NALL), 354-810 (MSST…QDEV), and 824-904 (RKTN…KSLE). Residues 36–54 (ASKKHYNNSKARRERKSGK) are compositionally biased toward basic residues. Residues S57, S58, and S64 each carry the phosphoserine modification. The segment covering 59–69 (DEEYDSEDEME) has biased composition (acidic residues). Over residues 70 to 84 (YERKPTDIRSLKDPK) the composition is skewed to basic and acidic residues. Low complexity-rich tracts occupy residues 93 to 105 (PGQK…QQQQ) and 130 to 163 (QSQY…GVVP). The span at 177-255 (GSNSNATSYQ…YVSHGSTNLG (79 aa)) shows a compositional bias: polar residues. 2 stretches are compositionally biased toward low complexity: residues 256 to 289 (QSQF…QQGQ) and 313 to 332 (QQQQ…NALL). A compositionally biased stretch (polar residues) spans 354-367 (MSSTTNMQDSNPSY). Positions 379–395 (GGQPPVPVRMQPQPPQP) are enriched in pro residues. Residues 466 to 475 (IQPNTTSSAA) show a composition bias toward polar residues. S476 carries the post-translational modification Phosphoserine. Composition is skewed to basic and acidic residues over residues 488–502 (DNER…DEST) and 526–541 (HGLD…KNAP). The span at 633-644 (VPQSKPQSQSQF) shows a compositional bias: polar residues. The span at 667–676 (SQSSNSSDSS) shows a compositional bias: low complexity. Phosphothreonine is present on T729. Over residues 749 to 759 (DSSKDANKYEK) the composition is skewed to basic and acidic residues. The span at 763-774 (PVTSSIQAQQST) shows a compositional bias: polar residues. The residue at position 861 (T861) is a Phosphothreonine. Pro residues predominate over residues 862 to 879 (PPRPPPSRSSPKKVPPVV). The span at 888 to 899 (KKPPVVPKKKPL) shows a compositional bias: basic residues.

The protein belongs to the AIM3 family. As to quaternary structure, interacts with RVS167.

Its subcellular location is the membrane raft. The protein is Altered inheritance of mitochondria protein 3 (AIM3) of Saccharomyces cerevisiae (strain JAY291) (Baker's yeast).